A 159-amino-acid chain; its full sequence is Succinate dehydrogenase [ubiquinone] cytochrome b small subunit, mitochondrial (159 aa).

The transit peptide at 1 to 56 (MAVLLKLGVLCSGQGARALSLRSRAVRPAFVSAFLQDQPTPGWRGTQHIHLSPSHQ) directs the protein to the mitochondrion. The Mitochondrial matrix portion of the chain corresponds to 57–63 (SGSKAAS). The helical transmembrane segment at 64–85 (LHWTSERVVSVLLLGLIPAGYL) threads the bilayer. The Mitochondrial intermembrane portion of the chain corresponds to 86–90 (NPCSV). Residues 91 to 111 (VDYSLAAALTLHSHWGIGQVV) form a helical membrane-spanning segment. H102 lines the heme b pocket. Over 112 to 120 (TDYVHGDAL) the chain is Mitochondrial matrix. Residue Y114 coordinates a ubiquinone. Residues 121-142 (QKATKAGLLAVSALTFAGLCYF) traverse the membrane as a helical segment. At 143–159 (NYHDVGICRAVAMLWKL) the chain is on the mitochondrial intermembrane side.

The protein belongs to the CybS family. As to quaternary structure, component of complex II composed of four subunits: the flavoprotein (FP) SDHA, iron-sulfur protein (IP) SDHB, and a cytochrome b560 composed of SDHC and SDHD.

The protein resides in the mitochondrion inner membrane. Its pathway is carbohydrate metabolism; tricarboxylic acid cycle. In terms of biological role, membrane-anchoring subunit of succinate dehydrogenase (SDH) that is involved in complex II of the mitochondrial electron transport chain and is responsible for transferring electrons from succinate to ubiquinone (coenzyme Q). SDH also oxidizes malate to the non-canonical enol form of oxaloacetate, enol-oxaloacetate. Enol-oxaloacetate, which is a potent inhibitor of the succinate dehydrogenase activity, is further isomerized into keto-oxaloacetate. In Rattus norvegicus (Rat), this protein is Succinate dehydrogenase [ubiquinone] cytochrome b small subunit, mitochondrial (Sdhd).